Consider the following 430-residue polypeptide: Asparagine--tRNA ligase (430 aa).

Belongs to the class-II aminoacyl-tRNA synthetase family. As to quaternary structure, homodimer.

Its subcellular location is the cytoplasm. The catalysed reaction is tRNA(Asn) + L-asparagine + ATP = L-asparaginyl-tRNA(Asn) + AMP + diphosphate + H(+). The sequence is that of Asparagine--tRNA ligase from Staphylococcus aureus (strain MSSA476).